Consider the following 152-residue polypeptide: Superoxide dismutase [Cu-Zn] (152 aa).

Residues H45, H47, and H62 each contribute to the Cu cation site. Cysteines 56 and 145 form a disulfide. Zn(2+) is bound by residues H62, H70, H79, and D82. H119 contacts Cu cation.

The protein belongs to the Cu-Zn superoxide dismutase family. Homodimer. The cofactor is Cu cation. It depends on Zn(2+) as a cofactor.

The protein resides in the cytoplasm. The catalysed reaction is 2 superoxide + 2 H(+) = H2O2 + O2. In terms of biological role, destroys radicals which are normally produced within the cells and which are toxic to biological systems. This is Superoxide dismutase [Cu-Zn] (SODCC) from Carica papaya (Papaya).